A 644-amino-acid polypeptide reads, in one-letter code: 3D-(3,5/4)-trihydroxycyclohexane-1,2-dione hydrolase (644 aa).

Thiamine diphosphate is bound at residue Glu-65. Residues 442-522 (SLPGDLQRMW…INVLLFDNSG (81 aa)) form a thiamine pyrophosphate binding region. Mg(2+) contacts are provided by Asp-493 and Asn-520.

The protein belongs to the TPP enzyme family. It depends on Mg(2+) as a cofactor. Thiamine diphosphate is required as a cofactor.

The enzyme catalyses 3D-3,5/4-trihydroxycyclohexane-1,2-dione + H2O = 5-deoxy-D-glucuronate + H(+). It functions in the pathway polyol metabolism; myo-inositol degradation into acetyl-CoA; acetyl-CoA from myo-inositol: step 3/7. In terms of biological role, involved in the cleavage of the C1-C2 bond of 3D-(3,5/4)-trihydroxycyclohexane-1,2-dione (THcHDO) to yield 5-deoxy-glucuronate (5DG). The polypeptide is 3D-(3,5/4)-trihydroxycyclohexane-1,2-dione hydrolase (Bacillus anthracis (strain A0248)).